The primary structure comprises 301 residues: GTPase Era (301 aa).

The Era-type G domain maps to Y7–E175. Positions G15–S22 are G1. G15–S22 contributes to the GTP binding site. A G2 region spans residues Q41 to H45. The segment at D62 to G65 is G3. GTP-binding positions include D62–L66 and N124–D127. Residues N124–D127 form a G4 region. The tract at residues I154 to A156 is G5. In terms of domain architecture, KH type-2 spans L206–S283.

This sequence belongs to the TRAFAC class TrmE-Era-EngA-EngB-Septin-like GTPase superfamily. Era GTPase family. Monomer.

It localises to the cytoplasm. It is found in the cell inner membrane. An essential GTPase that binds both GDP and GTP, with rapid nucleotide exchange. Plays a role in 16S rRNA processing and 30S ribosomal subunit biogenesis and possibly also in cell cycle regulation and energy metabolism. The sequence is that of GTPase Era from Escherichia coli O157:H7.